Here is a 591-residue protein sequence, read N- to C-terminus: Metalloendopeptidase OPG085 (591 aa).

Residue H41 participates in Zn(2+) binding. E44 is an active-site residue. H45 and E112 together coordinate Zn(2+).

It belongs to the peptidase M44 family. The cofactor is Zn(2+). Undergoes proteolytic processing during the course of infection. May be cleaved into 46 kDa and 22 kDa products (Potential).

Its subcellular location is the virion. Its function is as follows. Probably involved in maturation of some viral proteins by processing them preferentially at Ala-Gly-|-Ser/Thr/Lys motifs. Does not seem to be responsible for the cleavage of major core proteins. This Homo sapiens (Human) protein is Metalloendopeptidase OPG085 (OPG085).